The primary structure comprises 338 residues: Fructose-1,6-bisphosphatase class 1 1 (338 aa).

4 residues coordinate Mg(2+): glutamate 94, aspartate 116, leucine 118, and aspartate 119. Substrate-binding positions include 119-122 (DGSS), asparagine 210, and lysine 276. Glutamate 282 serves as a coordination point for Mg(2+).

The protein belongs to the FBPase class 1 family. In terms of assembly, homotetramer. The cofactor is Mg(2+).

Its subcellular location is the cytoplasm. It carries out the reaction beta-D-fructose 1,6-bisphosphate + H2O = beta-D-fructose 6-phosphate + phosphate. Its pathway is carbohydrate biosynthesis; gluconeogenesis. The chain is Fructose-1,6-bisphosphatase class 1 1 from Paraburkholderia phymatum (strain DSM 17167 / CIP 108236 / LMG 21445 / STM815) (Burkholderia phymatum).